The sequence spans 36 residues: Cytochrome b6-f complex subunit 7 (36 aa).

The helical transmembrane segment at 9–29 (NGAFIMIGLTLLGLAWGFVII) threads the bilayer.

The protein belongs to the PetM family. In terms of assembly, the 4 large subunits of the cytochrome b6-f complex are cytochrome b6, subunit IV (17 kDa polypeptide, PetD), cytochrome f and the Rieske protein, while the 4 small subunits are PetG, PetL, PetM and PetN. The complex functions as a dimer.

It is found in the cellular thylakoid membrane. Functionally, component of the cytochrome b6-f complex, which mediates electron transfer between photosystem II (PSII) and photosystem I (PSI), cyclic electron flow around PSI, and state transitions. The chain is Cytochrome b6-f complex subunit 7 from Synechocystis sp. (strain ATCC 27184 / PCC 6803 / Kazusa).